The chain runs to 270 residues: Probable septum site-determining protein MinC (270 aa).

The disordered stretch occupies residues 105–129 (DRRAPSSKAADEAPVQQAEPAAPAA). Low complexity predominate over residues 116-129 (EAPVQQAEPAAPAA).

This sequence belongs to the MinC family. As to quaternary structure, interacts with MinD and FtsZ.

Functionally, cell division inhibitor that blocks the formation of polar Z ring septums. Rapidly oscillates between the poles of the cell to destabilize FtsZ filaments that have formed before they mature into polar Z rings. Prevents FtsZ polymerization. In Burkholderia pseudomallei (strain 668), this protein is Probable septum site-determining protein MinC.